We begin with the raw amino-acid sequence, 243 residues long: 1-(5-phosphoribosyl)-5-[(5-phosphoribosylamino)methylideneamino] imidazole-4-carboxamide isomerase (243 aa).

The active-site Proton acceptor is Asp-8. The active-site Proton donor is Asp-129.

This sequence belongs to the HisA/HisF family.

It localises to the cytoplasm. The enzyme catalyses 1-(5-phospho-beta-D-ribosyl)-5-[(5-phospho-beta-D-ribosylamino)methylideneamino]imidazole-4-carboxamide = 5-[(5-phospho-1-deoxy-D-ribulos-1-ylimino)methylamino]-1-(5-phospho-beta-D-ribosyl)imidazole-4-carboxamide. It participates in amino-acid biosynthesis; L-histidine biosynthesis; L-histidine from 5-phospho-alpha-D-ribose 1-diphosphate: step 4/9. This Brucella anthropi (strain ATCC 49188 / DSM 6882 / CCUG 24695 / JCM 21032 / LMG 3331 / NBRC 15819 / NCTC 12168 / Alc 37) (Ochrobactrum anthropi) protein is 1-(5-phosphoribosyl)-5-[(5-phosphoribosylamino)methylideneamino] imidazole-4-carboxamide isomerase.